The chain runs to 674 residues: Probable 3',5'-cyclic-AMP phosphodiesterase pde-4 (674 aa).

The segment at 1–82 is disordered; sequence MPRRRGSSSS…TSSASSYHPP (82 aa). Positions 15 to 24 are enriched in gly residues; sequence GGSGGGGGFG. The segment covering 39-62 has biased composition (low complexity); it reads RTSSPSASSTSRTPPAALPPRTSA. Residues 66-78 show a composition bias toward polar residues; the sequence is PGSNHKLTSSASS. The PDEase domain maps to 328–660; that stretch reads HVPEYGVNCA…EWYQSRIPEE (333 aa). Histidine 407 (proton donor) is an active-site residue. Positions 411, 447, 448, and 565 each coordinate a divalent metal cation.

The protein belongs to the cyclic nucleotide phosphodiesterase family. The cofactor is a divalent metal cation. Expressed in dorsal D (DD) motor neurons and several other neurons at the L1 stage. Expression in DD neurons decreases gradually beginning in the late L1 stage. Highly expressed in adult ventral D (VD) motor neurons, but diminished in adult DD motor neurons.

It catalyses the reaction 3',5'-cyclic AMP + H2O = AMP + H(+). Its function is as follows. Hydrolyzes the second messenger 3',5'-cyclic AMP (cAMP), which is a key regulator of many important physiological processes. Antagonizes dorsal D (DD) motor neuron respecification by reducing levels of cAMP. This Caenorhabditis elegans protein is Probable 3',5'-cyclic-AMP phosphodiesterase pde-4 (pde-4).